Consider the following 303-residue polypeptide: Protoporphyrin uptake protein 1 (303 aa).

Topologically, residues 1–18 are extracellular; the sequence is MSTTDSGFVLYHYTPSKA. A helical membrane pass occupies residues 19 to 39; it reads AAIVFVVLFIIMTVIFAVQTL. Residues 40 to 76 are Cytoplasmic-facing; it reads YAARKSSKALKNNPFESSDDKVDSLEDAEYKQLKITP. Residues 77-97 traverse the membrane as a helical segment; the sequence is TVFAFIPFFTGCIMEAVGYIG. The Extracellular segment spans residues 98–111; it reads RALSSSNPERTTPY. A helical transmembrane segment spans residues 112–132; it reads IIQSVLLLVAPALIAATIYMI. Topologically, residues 133 to 154 are cytoplasmic; the sequence is FGRLLHVMRCQSLILISARFGT. Residues 155 to 175 traverse the membrane as a helical segment; that stretch reads TFFVVGDVFSFFLQAAGGGLM. The Extracellular portion of the chain corresponds to 176 to 183; it reads SKAGSTKT. The helical transmembrane segment at 184 to 204 threads the bilayer; sequence GSGLITAGLFVQVIFFGFFII. Over 205-226 the chain is Cytoplasmic; it reads NEIRFTVNVKRRCLFYEDISRK. The helical transmembrane segment at 227–247 threads the bilayer; the sequence is WIFVNATLLLSSMLILLRSIV. Residues 248–264 lie on the Extracellular side of the membrane; the sequence is RIVEFIQGFNGYIISHE. Residues 265–285 traverse the membrane as a helical segment; that stretch reads YFIYVFDAVPMLLVIIAFSVG. Over 286 to 303 the chain is Cytoplasmic; the sequence is SFFGNVFDVIKECQTLSN.

It belongs to the lipid-translocating exporter (LTE) (TC 9.A.26.1) family. In terms of processing, N-glycosylated.

It localises to the cell membrane. In terms of biological role, involved in inducible protoporphyrin IX influx and heme efflux. This is Protoporphyrin uptake protein 1 (PUG1) from Saccharomyces cerevisiae (strain ATCC 204508 / S288c) (Baker's yeast).